The following is a 476-amino-acid chain: Adenosylhomocysteinase (476 aa).

Positions 67, 142, and 202 each coordinate substrate. 203 to 205 (TTT) serves as a coordination point for NAD(+). Lys-232 and Asp-236 together coordinate substrate. Residues Asn-237, 266–271 (GYGDVG), Glu-289, Asn-324, 345–347 (IGH), and Asn-390 each bind NAD(+).

It belongs to the adenosylhomocysteinase family. The cofactor is NAD(+).

The protein localises to the cytoplasm. The enzyme catalyses S-adenosyl-L-homocysteine + H2O = L-homocysteine + adenosine. Its pathway is amino-acid biosynthesis; L-homocysteine biosynthesis; L-homocysteine from S-adenosyl-L-homocysteine: step 1/1. Its function is as follows. May play a key role in the regulation of the intracellular concentration of adenosylhomocysteine. This Synechococcus sp. (strain CC9605) protein is Adenosylhomocysteinase.